The primary structure comprises 289 residues: MEPLDQTPGFPLSPEPNYWYETTPSLLLVSYPHLLDISSNQSTQSVPFQGSSALLTAVIYITVFVVGLTGNTLAIYVVLRYAGMKTVTNIYILNLAVADELYIVGLPFLATQNVLSYWPFGSFLCRVVMTADSMNQFTSIFCLTVMSIDRYLAVVHPIRSTKWRHPRVAKVVSAAVWAVSFVVVLPVVIFSDVQVRPSRPLQVGTSSKCLVKRVQETFNSCNMIWPEPKNVWSTAFILYTAMVGFFGPLLIICLCYLLIVIKVRHRMSAAQVGAVVSTCPLNICCLSRR.

Residues 1–57 (MEPLDQTPGFPLSPEPNYWYETTPSLLLVSYPHLLDISSNQSTQSVPFQGSSALLTA) are Extracellular-facing. Asn40 is a glycosylation site (N-linked (GlcNAc...) asparagine). A helical transmembrane segment spans residues 58-79 (VIYITVFVVGLTGNTLAIYVVL). Topologically, residues 80 to 89 (RYAGMKTVTN) are cytoplasmic. A helical membrane pass occupies residues 90–110 (IYILNLAVADELYIVGLPFLA). Over 111-126 (TQNVLSYWPFGSFLCR) the chain is Extracellular. Cys125 and Cys221 are disulfide-bonded. The chain crosses the membrane as a helical span at residues 127 to 148 (VVMTADSMNQFTSIFCLTVMSI). Residues 149 to 170 (DRYLAVVHPIRSTKWRHPRVAK) lie on the Cytoplasmic side of the membrane. Residues 171 to 191 (VVSAAVWAVSFVVVLPVVIFS) form a helical membrane-spanning segment. The Extracellular segment spans residues 192 to 240 (DVQVRPSRPLQVGTSSKCLVKRVQETFNSCNMIWPEPKNVWSTAFILYT). Residues 241–261 (AMVGFFGPLLIICLCYLLIVI) form a helical membrane-spanning segment. At 262–289 (KVRHRMSAAQVGAVVSTCPLNICCLSRR) the chain is on the cytoplasmic side.

It belongs to the G-protein coupled receptor 1 family.

It is found in the cell membrane. This chain is Somatostatin-like receptor F_48D10.1, found in Takifugu rubripes (Japanese pufferfish).